Reading from the N-terminus, the 282-residue chain is MDPSLVLEQTIQDVSNLPSEFRYLLEEIGSNDLKLIEEKKKYEQKESQIHKFIRQQGSIPKHPQEDGLDKEIKESLLKCQSLQREKCVLANTALFLIARHLNKLEKNIALLEEDGVLAPVEEDGDMDSAAEASRESSVVSNSSVKKRRAASSSGSVPPTLKKKKTSRTSKLQNEIDVSSREKSVTPVSPSIEKKIARTKEFKNSRNGKGQNGSPENEEEDKTLYCFCQRVSFGEMVACDGPNCKYEWFHYDCVNLKEPPKGTWYCPECKIEMEKNKLKRKRN.

A coiled-coil region spans residues 35–86 (LIEEKKKYEQKESQIHKFIRQQGSIPKHPQEDGLDKEIKESLLKCQSLQREK). The segment at 123–217 (DGDMDSAAEA…KGQNGSPENE (95 aa)) is disordered. The segment covering 129–143 (AAEASRESSVVSNSS) has biased composition (low complexity). Ser-183 is modified (phosphoserine). Position 185 is a phosphothreonine (Thr-185). Position 188 is a phosphoserine (Ser-188). Residues 191 to 203 (IEKKIARTKEFKN) are compositionally biased toward basic and acidic residues. A compositionally biased stretch (polar residues) spans 204-214 (SRNGKGQNGSP). The PHD-type zinc-finger motif lies at 222–271 (TLYCFCQRVSFGEMVACDGPNCKYEWFHYDCVNLKEPPKGTWYCPECKIE). Positions 225, 227, 238, 243, 249, 252, 265, and 268 each coordinate Zn(2+).

It belongs to the ING family. In terms of assembly, interacts with H3K4me3 and to a lesser extent with H3K4me2. Component of the NuA4 histone acetyltransferase complex composed of at least ACT1, ARP4, YAF9, VID21, SWC4, EAF3, EAF5, EAF6, EAF7, EPL1, ESA1, TRA1 and YNG2.

The protein localises to the nucleus. Functionally, component of the NuA4 histone acetyltransferase complex which is involved in transcriptional activation of selected genes principally by acetylation of nucleosomal histone H4 and H2A. The NuA4 complex is also involved in DNA repair. Involved in cell cycle progression and meiosis. The sequence is that of Chromatin modification-related protein YNG2 (YNG2) from Saccharomyces cerevisiae (strain ATCC 204508 / S288c) (Baker's yeast).